A 397-amino-acid chain; its full sequence is Purine ribonucleoside efflux pump NepI (397 aa).

The Cytoplasmic portion of the chain corresponds to methionine 1–alanine 21. A helical transmembrane segment spans residues valine 22–leucine 42. Over leucine 43–glutamate 54 the chain is Periplasmic. Residues glycine 55–isoleucine 75 traverse the membrane as a helical segment. The Cytoplasmic portion of the chain corresponds to threonine 76–arginine 85. A helical membrane pass occupies residues tyrosine 86–asparagine 106. Residue serine 107 is a topological domain, periplasmic. The helical transmembrane segment at phenylalanine 108–methionine 128 threads the bilayer. Topologically, residues serine 129–serine 147 are cytoplasmic. Residues valine 148–glycine 168 form a helical membrane-spanning segment. The Periplasmic segment spans residues glycine 169–asparagine 175. The chain crosses the membrane as a helical span at residues valine 176–proline 196. Residues serine 197–arginine 215 lie on the Cytoplasmic side of the membrane. A helical transmembrane segment spans residues proline 216 to phenylalanine 236. Over threonine 237–threonine 255 the chain is Periplasmic. The chain crosses the membrane as a helical span at residues leucine 256–leucine 276. At lysine 277–lysine 281 the chain is on the cytoplasmic side. A helical transmembrane segment spans residues leucine 282 to glycine 302. The Periplasmic portion of the chain corresponds to serine 303–lysine 305. The chain crosses the membrane as a helical span at residues threonine 306–tryptophan 326. The Cytoplasmic segment spans residues serine 327–serine 343. Residues isoleucine 344–leucine 364 form a helical membrane-spanning segment. At aspartate 365–asparagine 366 the chain is on the periplasmic side. The helical transmembrane segment at phenylalanine 367–valine 387 threads the bilayer. Over alanine 388–serine 397 the chain is Cytoplasmic.

This sequence belongs to the major facilitator superfamily. DHA1 family. NepI (TC 2.A.1.2.26) subfamily.

The protein resides in the cell inner membrane. The enzyme catalyses inosine(in) + H(+)(out) = inosine(out) + H(+)(in). It catalyses the reaction guanosine(in) + H(+)(out) = guanosine(out) + H(+)(in). Functionally, involved in the efflux of purine ribonucleosides, such as inosine and guanosine. This is Purine ribonucleoside efflux pump NepI from Salmonella choleraesuis (strain SC-B67).